A 161-amino-acid chain; its full sequence is Allophycocyanin alpha subunit (161 aa).

Cysteine 81 serves as a coordination point for (2R,3E)-phycocyanobilin.

Belongs to the phycobiliprotein family. As to quaternary structure, heterodimer of an alpha and a beta chain. Post-translationally, contains one covalently linked phycocyanobilin chromophore. The chromophore on position 81 is added by the phycocyanobilin lyase CpcUS.

It is found in the cellular thylakoid membrane. In terms of biological role, light-harvesting photosynthetic bile pigment-protein from the phycobiliprotein complex. Allophycocyanin has a maximum absorption at approximately 650 nanometers. The sequence is that of Allophycocyanin alpha subunit (apcA) from Picosynechococcus sp. (strain ATCC 27264 / PCC 7002 / PR-6) (Agmenellum quadruplicatum).